Reading from the N-terminus, the 420-residue chain is Dachshund homolog dac-1 (420 aa).

Positions 23-77 are disordered; the sequence is PSSSSSSSNNSSSNTSSSNFLSPYEYQESSTSPRDTTDSSGESSLSSSGSSSSLN. 2 stretches are compositionally biased toward low complexity: residues 24–41 and 51–77; these read SSSS…SSSN and SSTS…SSLN. Residues 85–171 are DACHbox-N; the sequence is KLIKFRGHNV…LLKTSDFEKL (87 aa). Residues 242–258 are compositionally biased toward basic and acidic residues; the sequence is NSFERADDDDQNQRDAD. The disordered stretch occupies residues 242-321; that stretch reads NSFERADDDD…SSSSSGKNDE (80 aa). Polar residues predominate over residues 263–273; sequence LNLSKSGGNSE. A compositionally biased stretch (low complexity) spans 297–317; sequence GGSNSNSLSMSMEAGSSSSSG.

Belongs to the DACH/dachshund family. In terms of tissue distribution, expressed in AFD, AWC, ASE and ASK neurons. Expressed in the alae.

The protein localises to the nucleus. In terms of biological role, transcription factor. Plays a role in the thermotactic response. The sequence is that of Dachshund homolog dac-1 from Caenorhabditis elegans.